A 403-amino-acid polypeptide reads, in one-letter code: Chalcone synthase 3 (403 aa).

Cys-170 is an active-site residue.

This sequence belongs to the thiolase-like superfamily. Chalcone/stilbene synthases family.

The catalysed reaction is (E)-4-coumaroyl-CoA + 3 malonyl-CoA + 3 H(+) = 2',4,4',6'-tetrahydroxychalcone + 3 CO2 + 4 CoA. The protein operates within secondary metabolite biosynthesis; flavonoid biosynthesis. Functionally, the primary product of this enzyme is 4,2',4',6'-tetrahydroxychalcone (also termed naringenin-chalcone or chalcone) which can under specific conditions spontaneously isomerize into naringenin. The polypeptide is Chalcone synthase 3 (CHS3) (Gerbera hybrida (Daisy)).